The following is a 305-amino-acid chain: MIRKIIILMFTFFSNIHNEKIYHHKQRRKFLKGPLGYLNRNVIQKKHYNLYAKKFINYKEIQIQRINDYRKRSGVDKNNINYNLRDTYNYHETHLFVRNEVLPTLAKIENENLKEKEKNKEIFRNINDYNSNFTRQTFLQFLMDLYNIFLKIDDLFLENKTYFSILIYNGPMQLTNHLYDDIIYVSSVVENSDDVSPSEYCMEYISHLENLCEENKLSFLAHAYVFYKNFHLSKEHLLKSICKYLNIIKKLKSSTYVADVENFEFCLNKMSRKWSRWEKDNFLASLHNATNKMMILTKHFEKVKS.

An N-terminal signal peptide occupies residues 1–18 (MIRKIIILMFTFFSNIHN). The interval 1-83 (MIRKIIILMF…GVDKNNINYN (83 aa)) is sufficient for apicoplast targeting. 3 N-linked (GlcNAc...) asparagine glycosylation sites follow: asparagine 132, asparagine 159, and asparagine 288.

In terms of processing, proteolytically cleaved; targeted by its N-terminal leader sequence for import into the apicoplast where it undergoes proteolytic processing, resulting in an N-terminus starting at or near Gly-33 in the mature protein.

Its subcellular location is the plastid. The protein resides in the apicoplast. Functionally, essential for blood-stage parasite viability. Required for apicoplast biogenesis. Associates with the apicoplast genome and mediates apicoplast gene expression. Can bind heme. Can bind protoporphyrin IX. This chain is Divergent heme oxygenase-like protein, found in Plasmodium falciparum (isolate 3D7).